The following is a 1349-amino-acid chain: ABC multidrug transporter G (1349 aa).

The ABC transporter 1 domain occupies 51-299 (RQFLGFLKGS…FEDMGFVCPK (249 aa)). A glycan (N-linked (GlcNAc...) asparagine) is linked at Asn-144. The next 4 membrane-spanning stretches (helical) occupy residues 407–427 (LSLI…GSLF), 436–456 (SIFL…LESM), 492–512 (IPVV…MAAL), and 523–543 (WIIV…VGAL). An N-linked (GlcNAc...) asparagine glycan is attached at Asn-549. A run of 2 helical transmembrane segments spans residues 550 to 570 (ASKI…YLIP) and 580 to 600 (WIFY…NEFV). A glycan (N-linked (GlcNAc...) asparagine) is linked at Asn-649. A helical transmembrane segment spans residues 659 to 679 (FGVIIGFWVFFIVLTALGLEL). In terms of domain architecture, ABC transporter 2 spans 721 to 963 (FTWHDLDYHV…VLDYFARHGA (243 aa)). 757 to 764 (GCSGAGKT) provides a ligand contact to ATP. Asn-994 carries an N-linked (GlcNAc...) asparagine glycan. Transmembrane regions (helical) follow at residues 1056-1076 (VILH…IGDG), 1085-1105 (FAIF…QPFF), 1121-1143 (IYHW…ILCA), 1166-1186 (MYLQ…GIAA), 1193-1213 (FAAV…CGVV), and 1226-1246 (WLYY…EVLW). Asn-1287 carries an N-linked (GlcNAc...) asparagine glycan. A helical transmembrane segment spans residues 1318–1338 (TGITALFCVSSYAMVFLMMKL).

It belongs to the ABC transporter superfamily. ABCG family. PDR (TC 3.A.1.205) subfamily.

It localises to the cell membrane. Its function is as follows. ABC efflux transporter that seems not to be able to transport azoles, nor rhodamine 6G (R-6G), a known substrate for many ABC transporters. This is ABC multidrug transporter G from Aspergillus fumigatus (strain ATCC MYA-4609 / CBS 101355 / FGSC A1100 / Af293) (Neosartorya fumigata).